The following is a 208-amino-acid chain: MSPPLPQAPQQPAPRRGLGHDTAVAAVCGLVVALMVGASFAAVPFYNWFCRTTGFNGTTQVAHAVPSSAPLDRTVTVSFDSNVNGLPWKFEPEQREIEVPIGKVVTVYYRITNLSRSDTVGQAAYNVTPLTVGSYFTKINCFCFTEQPLAAGESRDMPVVFYIDPAFAADSENDTVKTITLSYTYYPVRDPAPKPVASSEPAPRKGNL.

Topologically, residues 1–19 (MSPPLPQAPQQPAPRRGLG) are cytoplasmic. The chain crosses the membrane as a helical; Signal-anchor for type II membrane protein span at residues 20–42 (HDTAVAAVCGLVVALMVGASFAA). Over 43–208 (VPFYNWFCRT…SEPAPRKGNL (166 aa)) the chain is Periplasmic.

It belongs to the COX11/CtaG family.

The protein localises to the cell inner membrane. Its function is as follows. Exerts its effect at some terminal stage of cytochrome c oxidase synthesis, probably by being involved in the insertion of the copper B into subunit I. The sequence is that of Cytochrome c oxidase assembly protein CtaG from Rhodopseudomonas palustris (strain TIE-1).